Here is an 85-residue protein sequence, read N- to C-terminus: Exodeoxyribonuclease 7 small subunit (85 aa).

This sequence belongs to the XseB family. In terms of assembly, heterooligomer composed of large and small subunits.

The protein resides in the cytoplasm. It carries out the reaction Exonucleolytic cleavage in either 5'- to 3'- or 3'- to 5'-direction to yield nucleoside 5'-phosphates.. Its function is as follows. Bidirectionally degrades single-stranded DNA into large acid-insoluble oligonucleotides, which are then degraded further into small acid-soluble oligonucleotides. The polypeptide is Exodeoxyribonuclease 7 small subunit (Alkalilimnicola ehrlichii (strain ATCC BAA-1101 / DSM 17681 / MLHE-1)).